A 116-amino-acid chain; its full sequence is Ribonuclease P protein component (116 aa).

The protein belongs to the RnpA family. Consists of a catalytic RNA component (M1 or rnpB) and a protein subunit.

It carries out the reaction Endonucleolytic cleavage of RNA, removing 5'-extranucleotides from tRNA precursor.. RNaseP catalyzes the removal of the 5'-leader sequence from pre-tRNA to produce the mature 5'-terminus. It can also cleave other RNA substrates such as 4.5S RNA. The protein component plays an auxiliary but essential role in vivo by binding to the 5'-leader sequence and broadening the substrate specificity of the ribozyme. This Picosynechococcus sp. (strain ATCC 27264 / PCC 7002 / PR-6) (Agmenellum quadruplicatum) protein is Ribonuclease P protein component.